Here is a 343-residue protein sequence, read N- to C-terminus: Dimethyladenosine transferase 1, mitochondrial (343 aa).

Residues 1-27 (MAASGKLSTWRLPPLPTIREIIKLLRV) constitute a mitochondrion transit peptide. Residues leucine 38, glycine 63, glutamate 85, lysine 86, aspartate 111, valine 112, and asparagine 141 each contribute to the S-adenosyl-L-methionine site.

This sequence belongs to the class I-like SAM-binding methyltransferase superfamily. rRNA adenine N(6)-methyltransferase family. KsgA subfamily. Interacts with mitochondrial RNA polymerase POLRMT. Interacts with TFAM. Bound to the maturing mtSSU until the late stages of assembly.

The protein localises to the mitochondrion. The enzyme catalyses adenosine(N)/adenosine(N+1) in rRNA + 4 S-adenosyl-L-methionine = N(6)-dimethyladenosine(N)/N(6)-dimethyladenosine(N+1) in rRNA + 4 S-adenosyl-L-homocysteine + 4 H(+). Functionally, S-adenosyl-L-methionine-dependent methyltransferase which specifically dimethylates mitochondrial 12S rRNA at the conserved stem loop. Also required for basal transcription of mitochondrial DNA, probably via its interaction with POLRMT and TFAM. Stimulates transcription independently of the methyltransferase activity. Its function is as follows. Mitochondrial methyltransferase which uses S-adenosyl methionine to dimethylate two highly conserved adjacent adenosine residues (A1583 and A1584) within the loop of helix 45 at the 3-prime end of 12S rRNA, thereby regulating the assembly or stability of the small subunit of the mitochondrial ribosome. Also required for basal transcription of mitochondrial DNA, probably via its interaction with POLRMT and TFAM. Stimulates transcription independently of the methyltransferase activity. This is Dimethyladenosine transferase 1, mitochondrial (TFB1M) from Pongo abelii (Sumatran orangutan).